The following is a 40-amino-acid chain: Photosystem II reaction center protein J (40 aa).

Residues 8 to 28 (IPLWIIGTGAGILVIGLIGIF) traverse the membrane as a helical segment.

This sequence belongs to the PsbJ family. As to quaternary structure, PSII is composed of 1 copy each of membrane proteins PsbA, PsbB, PsbC, PsbD, PsbE, PsbF, PsbH, PsbI, PsbJ, PsbK, PsbL, PsbM, PsbT, PsbX, PsbY, PsbZ, Psb30/Ycf12, at least 3 peripheral proteins of the oxygen-evolving complex and a large number of cofactors. It forms dimeric complexes.

Its subcellular location is the plastid. It is found in the chloroplast thylakoid membrane. Its function is as follows. One of the components of the core complex of photosystem II (PSII). PSII is a light-driven water:plastoquinone oxidoreductase that uses light energy to abstract electrons from H(2)O, generating O(2) and a proton gradient subsequently used for ATP formation. It consists of a core antenna complex that captures photons, and an electron transfer chain that converts photonic excitation into a charge separation. In Aethionema grandiflorum (Persian stone-cress), this protein is Photosystem II reaction center protein J.